Consider the following 376-residue polypeptide: Putative glutamate--cysteine ligase 2-1 (376 aa).

It belongs to the glutamate--cysteine ligase type 2 family. YbdK subfamily.

It carries out the reaction L-cysteine + L-glutamate + ATP = gamma-L-glutamyl-L-cysteine + ADP + phosphate + H(+). ATP-dependent carboxylate-amine ligase which exhibits weak glutamate--cysteine ligase activity. The polypeptide is Putative glutamate--cysteine ligase 2-1 (Mycobacterium sp. (strain KMS)).